Reading from the N-terminus, the 120-residue chain is Purkinje cell protein 2 (120 aa).

2 GoLoco domains span residues 7 to 29 and 47 to 69; these read QEGF…RCSL and MDNL…RVTV. A disordered region spans residues 16–120; sequence HVQGDRMEEQ…SSPQPQTQAP (105 aa). Positions 108–120 are enriched in polar residues; the sequence is RRNSSPQPQTQAP. Residue S111 is modified to Phosphoserine.

As to expression, cerebellum (Purkinje cells) and retinal bipolar neurons.

In terms of biological role, may function as a cell-type specific modulator for G protein-mediated cell signaling. This Mus musculus (Mouse) protein is Purkinje cell protein 2 (Pcp2).